The primary structure comprises 102 residues: MFLTAVLLRGRIPGRQWIGKHRRPRTVSFQAKESMIRRLEVEAENHYWLSMPYMTAEQECGHAAERRAQAFEAIKAAATSKFPKHRYIADQLDHLNISKKWS.

It belongs to the mitochondrion-specific ribosomal protein mL63 family.

The protein localises to the mitochondrion. The sequence is that of Large ribosomal subunit protein mL63 (Mrpl57) from Mus musculus (Mouse).